The following is a 106-amino-acid chain: Iron-sulfur cluster assembly protein CyaY (106 aa).

This sequence belongs to the frataxin family.

Its function is as follows. Involved in iron-sulfur (Fe-S) cluster assembly. May act as a regulator of Fe-S biogenesis. The sequence is that of Iron-sulfur cluster assembly protein CyaY from Escherichia coli O127:H6 (strain E2348/69 / EPEC).